Here is a 122-residue protein sequence, read N- to C-terminus: Large ribosomal subunit protein uL22 (122 aa).

It belongs to the universal ribosomal protein uL22 family. Part of the 50S ribosomal subunit.

This protein binds specifically to 23S rRNA; its binding is stimulated by other ribosomal proteins, e.g. L4, L17, and L20. It is important during the early stages of 50S assembly. It makes multiple contacts with different domains of the 23S rRNA in the assembled 50S subunit and ribosome. Its function is as follows. The globular domain of the protein is located near the polypeptide exit tunnel on the outside of the subunit, while an extended beta-hairpin is found that lines the wall of the exit tunnel in the center of the 70S ribosome. This is Large ribosomal subunit protein uL22 from Prochlorococcus marinus (strain MIT 9303).